The primary structure comprises 206 residues: Urease accessory protein UreG (206 aa).

13-20 (GPVGSGKT) contributes to the GTP binding site.

Belongs to the SIMIBI class G3E GTPase family. UreG subfamily. As to quaternary structure, homodimer. UreD, UreF and UreG form a complex that acts as a GTP-hydrolysis-dependent molecular chaperone, activating the urease apoprotein by helping to assemble the nickel containing metallocenter of UreC. The UreE protein probably delivers the nickel.

The protein resides in the cytoplasm. Its function is as follows. Facilitates the functional incorporation of the urease nickel metallocenter. This process requires GTP hydrolysis, probably effectuated by UreG. The polypeptide is Urease accessory protein UreG (Natronomonas pharaonis (strain ATCC 35678 / DSM 2160 / CIP 103997 / JCM 8858 / NBRC 14720 / NCIMB 2260 / Gabara) (Halobacterium pharaonis)).